The primary structure comprises 491 residues: Peptidoglycan D,D-transpeptidase PbpA (491 aa).

Residues 1-8 (MNTSLRRV) are Cytoplasmic-facing. A helical; Signal-anchor for type II membrane protein membrane pass occupies residues 9–29 (AVAIMVLIVLLLANATVTQVF). At 30–491 (AADGLRADPR…TIAAALREGS (462 aa)) the chain is on the periplasmic side. A transpeptidase region spans residues 160 to 484 (GSVVALEPST…AAPIGRATIA (325 aa)). Residue Ser222 is the Acyl-ester intermediate of the active site.

The protein belongs to the transpeptidase family.

It localises to the cell inner membrane. It carries out the reaction Preferential cleavage: (Ac)2-L-Lys-D-Ala-|-D-Ala. Also transpeptidation of peptidyl-alanyl moieties that are N-acyl substituents of D-alanine.. It participates in cell wall biogenesis; peptidoglycan biosynthesis. Transpeptidase that catalyzes cross-linking of the peptidoglycan cell wall. Required for the regulation of cell length. This Mycolicibacterium smegmatis (strain ATCC 700084 / mc(2)155) (Mycobacterium smegmatis) protein is Peptidoglycan D,D-transpeptidase PbpA (pbpA).